The chain runs to 316 residues: UDP-3-O-acylglucosamine N-acyltransferase 2 (316 aa).

His230 (proton acceptor) is an active-site residue.

Belongs to the transferase hexapeptide repeat family. LpxD subfamily. Homotrimer.

The catalysed reaction is a UDP-3-O-[(3R)-3-hydroxyacyl]-alpha-D-glucosamine + a (3R)-hydroxyacyl-[ACP] = a UDP-2-N,3-O-bis[(3R)-3-hydroxyacyl]-alpha-D-glucosamine + holo-[ACP] + H(+). It functions in the pathway bacterial outer membrane biogenesis; LPS lipid A biosynthesis. Its function is as follows. Catalyzes the N-acylation of UDP-3-O-acylglucosamine using 3-hydroxyacyl-ACP as the acyl donor. Is involved in the biosynthesis of lipid A, a phosphorylated glycolipid that anchors the lipopolysaccharide to the outer membrane of the cell. This Sulfurimonas denitrificans (strain ATCC 33889 / DSM 1251) (Thiomicrospira denitrificans (strain ATCC 33889 / DSM 1251)) protein is UDP-3-O-acylglucosamine N-acyltransferase 2.